We begin with the raw amino-acid sequence, 476 residues long: Proline--tRNA ligase (476 aa).

This sequence belongs to the class-II aminoacyl-tRNA synthetase family. ProS type 3 subfamily. As to quaternary structure, homodimer.

Its subcellular location is the cytoplasm. It catalyses the reaction tRNA(Pro) + L-proline + ATP = L-prolyl-tRNA(Pro) + AMP + diphosphate. Its function is as follows. Catalyzes the attachment of proline to tRNA(Pro) in a two-step reaction: proline is first activated by ATP to form Pro-AMP and then transferred to the acceptor end of tRNA(Pro). The chain is Proline--tRNA ligase from Mycoplasma mobile (strain ATCC 43663 / 163K / NCTC 11711) (Mesomycoplasma mobile).